The chain runs to 1029 residues: Tyrosine-protein kinase-like otk (1029 aa).

An N-terminal signal peptide occupies residues 1-18; the sequence is MISIYGLVMALMMASVLA. The Extracellular portion of the chain corresponds to 19-577; that stretch reads SSSRFQRVPQ…GGDGFLVTRA (559 aa). Ig-like C2-type domains are found at residues 21–104, 105–195, 247–361, 364–459, and 464–554; these read SRFQ…REAS, PPAK…RVMS, PEDL…APIS, PGIL…VAIN, and PKFS…VQLV. N35 carries N-linked (GlcNAc...) asparagine glycosylation. Disulfide bonds link C42–C91, C133–C184, C272–C350, and C395–C443. Residues N332, N413, N425, N440, N453, N508, and N520 are each glycosylated (N-linked (GlcNAc...) asparagine). C486 and C538 form a disulfide bridge. The chain crosses the membrane as a helical span at residues 578–598; that stretch reads VLITMTVALAYIVLVVGLMLW. Topologically, residues 599-1029 are cytoplasmic; sequence CRYRRQARKA…LSKAMQIAEK (431 aa). 2 disordered regions span residues 613–675 and 714–756; these read LSTK…KKSA and SPSD…KTSM. Positions 651-669 are enriched in polar residues; that stretch reads KSSGDAQKSDDTACSQQSR. Phosphoserine is present on S674. Positions 688-1024 constitute a Protein kinase; inactive domain; sequence LSELIQIGRG…QLGAALSKAM (337 aa). Positions 716–727 are enriched in basic and acidic residues; it reads SDKDADTEKQHS.

Belongs to the protein kinase superfamily. Tyr protein kinase family. Insulin receptor subfamily. Interacts with plexA; component of a receptor complex that mediates the repulsive signaling in response to Semaphorin ligands.

Its subcellular location is the cell membrane. Its function is as follows. Acts as a calcium-dependent, homophilic cell adhesion molecule that regulates neural recognition during the development of the nervous system. Component of the repulsive Plexin signaling response to regulate motor axon guidance at the embryonic stage. Also component of a receptor complex that is required in the adult visual system to innervate the lamina layer; specific targeting of R1-R6 axons. This Drosophila sechellia (Fruit fly) protein is Tyrosine-protein kinase-like otk.